We begin with the raw amino-acid sequence, 315 residues long: MDEKKRKVTVVGAGAVGSTFAYALAQSGYADEIAITDMNKNFAEGQALDLVQGLPFLPQVDIHAGDKTDYADSDIVVVTAGAKQQSGETRIDLLKRNASIITGIAKDIAESGCSGVMLIVSNPVDILTRAALKASGWERGRVIGSGTVLDTARFRYTLSKECGVDARNIHGYILGEHGDSEFAAWSMTSVAGRRIDEYCSGGVCSSGPHFDKAKILEEVRNSAYHIIDYKGSTYFAVGLALTRIAGAILRNEHSILSVSMTLDGEFGLKDVCLSVPCIVGRSGAERVIESDLPADEQAALEASAKRLKEAFTEMN.

NAD(+) contacts are provided by residues Val16, Asp37, and 81-82 (GA). Residues Gln84, Arg90, and 122–125 (NPVD) contribute to the substrate site. Residues 120 to 122 (VSN) and Ser145 contribute to the NAD(+) site. 150–153 (DTAR) is a substrate binding site. Beta-D-fructose 1,6-bisphosphate contacts are provided by Arg155 and His170. His177 (proton acceptor) is an active-site residue. Tyr224 is modified (phosphotyrosine). Substrate is bound at residue Thr233.

Belongs to the LDH/MDH superfamily. LDH family. Homotetramer.

The protein localises to the cytoplasm. The enzyme catalyses (S)-lactate + NAD(+) = pyruvate + NADH + H(+). The protein operates within fermentation; pyruvate fermentation to lactate; (S)-lactate from pyruvate: step 1/1. Its activity is regulated as follows. Allosterically activated by fructose 1,6-bisphosphate (FBP). In terms of biological role, catalyzes the conversion of lactate to pyruvate. This Treponema denticola (strain ATCC 35405 / DSM 14222 / CIP 103919 / JCM 8153 / KCTC 15104) protein is L-lactate dehydrogenase.